The following is a 256-amino-acid chain: tRNA pseudouridine synthase A (256 aa).

The active-site Nucleophile is Asp-52. Substrate is bound at residue Tyr-111.

This sequence belongs to the tRNA pseudouridine synthase TruA family. As to quaternary structure, homodimer.

It catalyses the reaction uridine(38/39/40) in tRNA = pseudouridine(38/39/40) in tRNA. In terms of biological role, formation of pseudouridine at positions 38, 39 and 40 in the anticodon stem and loop of transfer RNAs. The polypeptide is tRNA pseudouridine synthase A (Paramagnetospirillum magneticum (strain ATCC 700264 / AMB-1) (Magnetospirillum magneticum)).